Reading from the N-terminus, the 428-residue chain is tRNA modification GTPase MnmE (428 aa).

(6S)-5-formyl-5,6,7,8-tetrahydrofolate contacts are provided by arginine 20, glutamate 76, and arginine 116. Positions 212–351 (GFEVAIVGAP…LVAAIGERLL (140 aa)) constitute a TrmE-type G domain. Asparagine 222 provides a ligand contact to K(+). GTP contacts are provided by residues 222 to 227 (NAGKST), 241 to 247 (SEIAGTT), and 266 to 269 (DTAG). Serine 226 contributes to the Mg(2+) binding site. Residues serine 241, isoleucine 243, and threonine 246 each contribute to the K(+) site. Residue threonine 247 participates in Mg(2+) binding. Residue lysine 428 coordinates (6S)-5-formyl-5,6,7,8-tetrahydrofolate.

Belongs to the TRAFAC class TrmE-Era-EngA-EngB-Septin-like GTPase superfamily. TrmE GTPase family. As to quaternary structure, homodimer. Heterotetramer of two MnmE and two MnmG subunits. Requires K(+) as cofactor.

It localises to the cytoplasm. Its function is as follows. Exhibits a very high intrinsic GTPase hydrolysis rate. Involved in the addition of a carboxymethylaminomethyl (cmnm) group at the wobble position (U34) of certain tRNAs, forming tRNA-cmnm(5)s(2)U34. This chain is tRNA modification GTPase MnmE, found in Cereibacter sphaeroides (strain ATCC 17029 / ATH 2.4.9) (Rhodobacter sphaeroides).